We begin with the raw amino-acid sequence, 157 residues long: MAPKKEEKPASQAAEAPEVKAEAKPKAVKAPKKKEKKAPAKKVAKEPSAGGEDGDKKSKKKAKVAKSETYKLYIYKVLKQVHPDTGISSKAMSIMNSFINDIFEKVATEASKLSRYNKKPTVTSREIQTAVRLVLPGELAKHAVSEGTKAVTKFTSA.

The segment at 1–64 is disordered; it reads MAPKKEEKPA…DKKSKKKAKV (64 aa). Positions 26 to 42 are enriched in basic residues; sequence KAVKAPKKKEKKAPAKK. Residue Lys153 forms a Glycyl lysine isopeptide (Lys-Gly) (interchain with G-Cter in ubiquitin) linkage.

Belongs to the histone H2B family. In terms of assembly, the nucleosome is a histone octamer containing two molecules each of H2A, H2B, H3 and H4 assembled in one H3-H4 heterotetramer and two H2A-H2B heterodimers. The octamer wraps approximately 147 bp of DNA. Monoubiquitinated to form H2BK143ub1; may give a specific tag for epigenetic transcriptional activation.

It is found in the nucleus. It localises to the chromosome. Its function is as follows. Core component of nucleosome. Nucleosomes wrap and compact DNA into chromatin, limiting DNA accessibility to the cellular machineries which require DNA as a template. Histones thereby play a central role in transcription regulation, DNA repair, DNA replication and chromosomal stability. DNA accessibility is regulated via a complex set of post-translational modifications of histones, also called histone code, and nucleosome remodeling. The sequence is that of Histone H2B.3 from Volvox carteri (Green alga).